We begin with the raw amino-acid sequence, 786 residues long: Receptor-like protein 30 (786 aa).

The signal sequence occupies residues 1–30; sequence MIPSQSNSFSGSVITLYFFLLGSLVLRTLA. The Extracellular portion of the chain corresponds to 31–739; the sequence is SSRLHYCRHD…SEPEEQVINW (709 aa). N-linked (GlcNAc...) asparagine glycosylation is found at Asn-67, Asn-98, Asn-115, and Asn-133. LRR repeat units lie at residues 110–133, 134–158, 159–181, and 183–204; these read LQQL…SLGN, LSRL…VSKL, NQLR…SFTN, and TKLS…SFIL. Residues Asn-181, Asn-199, and Asn-206 are each glycosylated (N-linked (GlcNAc...) asparagine). LRR repeat units lie at residues 207 to 231, 233 to 255, 257 to 279, 280 to 304, 305 to 328, 329 to 352, 354 to 375, 376 to 399, 400 to 423, 425 to 447, 448 to 472, 474 to 496, 497 to 524, and 526 to 546; these read LTSL…MSGL, NLKY…LFTI, SLQI…NISS, SSRL…ISEI, HSLI…ISKL, VNLQ…LWGL, TVTL…ALDG, ESMQ…ICKQ, RFLK…LKNS, YWLK…VFVN, ASML…LINC, GMEL…LVSL, PSLR…GFQH, and RLID…YFSN. N-linked (GlcNAc...) asparagine glycosylation is present at Asn-276. The N-linked (GlcNAc...) asparagine glycan is linked to Asn-338. Asn-413, Asn-422, Asn-434, Asn-447, and Asn-471 each carry an N-linked (GlcNAc...) asparagine glycan. N-linked (GlcNAc...) asparagine glycosylation is present at Asn-558. LRR repeat units follow at residues 596-621, 622-645, 646-669, and 671-694; these read IPYF…VGLL, KELR…LANL, TNLE…LGSL, and FLST…QFQS. Residues Asn-628 and Asn-644 are each glycosylated (N-linked (GlcNAc...) asparagine). A glycan (N-linked (GlcNAc...) asparagine) is linked at Asn-676. A helical transmembrane segment spans residues 740–760; sequence IAAAIAYGPGVFCGLVIGHIF. The Cytoplasmic segment spans residues 761 to 786; that stretch reads FTAHKHEWFMEKFHRNKRRVVTTSAR.

This sequence belongs to the RLP family.

It is found in the cell membrane. In terms of biological role, receptor for microbe-associated molecular patterns (MAMPs) that induces a BAK1-dependent basal immune response to necrotrophic fungi (e.g. S.sclerotiorum) in the presence of MAMPs (e.g. flg22 and SCLEROTINIA CULTURE FILTRATE ELICITOR1 (SCFE1) from the necrotrophic fungal pathogen S.sclerotiorum). Functionality seems to depend on the presence of the receptor kinase SOBIR1 as an adapter protein. Required for full non-host resistance to bacterial pathogens (e.g. P.syringae pv phaseolicola). This is Receptor-like protein 30 from Arabidopsis thaliana (Mouse-ear cress).